The primary structure comprises 562 residues: Formate--tetrahydrofolate ligase (562 aa).

Position 71-78 (71-78 (TPAGEGKS)) interacts with ATP.

The protein belongs to the formate--tetrahydrofolate ligase family.

It catalyses the reaction (6S)-5,6,7,8-tetrahydrofolate + formate + ATP = (6R)-10-formyltetrahydrofolate + ADP + phosphate. Its pathway is one-carbon metabolism; tetrahydrofolate interconversion. This chain is Formate--tetrahydrofolate ligase, found in Bacillus cereus (strain AH187).